An 81-amino-acid chain; its full sequence is Sulfur carrier protein TusA (81 aa).

Catalysis depends on Cys19, which acts as the Cysteine persulfide intermediate.

The protein belongs to the sulfur carrier protein TusA family.

It is found in the cytoplasm. Functionally, sulfur carrier protein which probably makes part of a sulfur-relay system. This chain is Sulfur carrier protein TusA, found in Shewanella sp. (strain ANA-3).